The sequence spans 365 residues: Chorismate synthase (365 aa).

Positions 48 and 54 each coordinate NADP(+). FMN is bound by residues 125–127, 238–239, glycine 278, 293–297, and arginine 319; these read RSS, NA, and KPTSS.

This sequence belongs to the chorismate synthase family. As to quaternary structure, homotetramer. Requires FMNH2 as cofactor.

The catalysed reaction is 5-O-(1-carboxyvinyl)-3-phosphoshikimate = chorismate + phosphate. It participates in metabolic intermediate biosynthesis; chorismate biosynthesis; chorismate from D-erythrose 4-phosphate and phosphoenolpyruvate: step 7/7. Catalyzes the anti-1,4-elimination of the C-3 phosphate and the C-6 proR hydrogen from 5-enolpyruvylshikimate-3-phosphate (EPSP) to yield chorismate, which is the branch point compound that serves as the starting substrate for the three terminal pathways of aromatic amino acid biosynthesis. This reaction introduces a second double bond into the aromatic ring system. In Alteromonas mediterranea (strain DSM 17117 / CIP 110805 / LMG 28347 / Deep ecotype), this protein is Chorismate synthase.